A 445-amino-acid chain; its full sequence is Phosphoglucosamine mutase (445 aa).

Catalysis depends on Ser-102, which acts as the Phosphoserine intermediate. Mg(2+)-binding residues include Ser-102, Asp-240, Asp-242, and Asp-244. Ser-102 carries the phosphoserine modification.

The protein belongs to the phosphohexose mutase family. Mg(2+) serves as cofactor. In terms of processing, activated by phosphorylation.

It catalyses the reaction alpha-D-glucosamine 1-phosphate = D-glucosamine 6-phosphate. Catalyzes the conversion of glucosamine-6-phosphate to glucosamine-1-phosphate. The chain is Phosphoglucosamine mutase from Mycolicibacterium gilvum (strain PYR-GCK) (Mycobacterium gilvum (strain PYR-GCK)).